The chain runs to 121 residues: Large ribosomal subunit protein uL22 (121 aa).

The protein belongs to the universal ribosomal protein uL22 family. In terms of assembly, part of the 50S ribosomal subunit.

This protein binds specifically to 23S rRNA; its binding is stimulated by other ribosomal proteins, e.g. L4, L17, and L20. It is important during the early stages of 50S assembly. It makes multiple contacts with different domains of the 23S rRNA in the assembled 50S subunit and ribosome. Functionally, the globular domain of the protein is located near the polypeptide exit tunnel on the outside of the subunit, while an extended beta-hairpin is found that lines the wall of the exit tunnel in the center of the 70S ribosome. The chain is Large ribosomal subunit protein uL22 from Synechococcus sp. (strain CC9311).